The following is a 921-amino-acid chain: Phototropin-1B (921 aa).

The segment covering 1–11 has biased composition (gly residues); the sequence is MASKGTEGGHG. Disordered stretches follow at residues 1–59 and 88–118; these read MASK…SPFL and TGLP…QSAA. Over residues 40 to 51 the composition is skewed to low complexity; the sequence is SSASSFRTAAAA. Polar residues predominate over residues 97-117; that stretch reads RPSSGSARTSSEDNPQQQQSA. The PAS 1 domain maps to 123-197; the sequence is VSEELRAALS…KIRQSLANGS (75 aa). Residues 172–177, Arg190, Asn205, Asn215, and Gln236 contribute to the FMN site; that span reads NCRFLQ. Cys173 bears the S-4a-FMN cysteine mark. One can recognise a PAC 1 domain in the interval 197–251; that stretch reads SNYCGRILNYKKDGTPFWNLLTIAPIKDEDGRLLKFIGMQVEVSKYTEGKKDTVV. Residues 286-295 are compositionally biased toward polar residues; sequence RSLSESSNNT. Disordered regions lie at residues 286 to 345 and 366 to 391; these read RSLS…QVNR and EKNM…SFED. Basic and acidic residues-rich tracts occupy residues 312-321 and 366-376; these read PSKRSSESGS and EKNMLKPRDED. Residues 400 to 473 form the PAS 2 domain; the sequence is RGIDLATTLE…RKIRDAIDNQ (74 aa). FMN is bound by residues 449–454, Arg467, Asn482, Asn492, and Gln513; that span reads NCRFLQ. Cys450 is modified (S-4a-FMN cysteine). Residues 474–528 form the PAC 2 domain; the sequence is AEVTVQLINYTKSGKKFWNLFHLQPMRDQKGDVQYFIGVQLDGTEHVQDDAAKEG. A Protein kinase domain is found at 594–881; the sequence is FRPVKPLGSG…ANEIKGHPFF (288 aa). ATP-binding positions include 600–608 and Lys623; that span reads LGSGDTGSV. The Proton acceptor role is filled by Asp719.

The protein belongs to the protein kinase superfamily. Ser/Thr protein kinase family. Homodimer. The cofactor is FMN. Post-translationally, autophosphorylated in response to blue light irradiation. In terms of processing, 2 molecules of FMN bind covalently to cysteines after exposure to blue light and are reversed in the dark.

It catalyses the reaction L-seryl-[protein] + ATP = O-phospho-L-seryl-[protein] + ADP + H(+). The enzyme catalyses L-threonyl-[protein] + ATP = O-phospho-L-threonyl-[protein] + ADP + H(+). Protein kinase that acts as a blue light photoreceptor in a signal-transduction pathway for phototropic responses. Regulates a wide range of physiological activities in plants that maximize the efficiency of photosynthesis, such as chloroplast relocations, stomata opening, and leaf expansion. This chain is Phototropin-1B (PHOT1B), found in Oryza sativa subsp. japonica (Rice).